We begin with the raw amino-acid sequence, 151 residues long: Calmodulin (151 aa).

4 consecutive EF-hand domains span residues 10–45 (EQISEFKEAFSLFDKDGDGSITTKELGIVMRSLGQN), 46–81 (PTEAELQDMVNEVDADGNGTIDFPEFLAMMARKMKD), 83–118 (DSEEEIREAFKVFDKDGNGIISAAELRHVMTNLGEK), and 119–151 (LTDEEVDEMIREADVDGDGVIDYSEFVKMMLSK). Ca(2+) is bound by residues Asp-23, Asp-25, Asp-27, Ser-29, Glu-34, Asp-59, Asp-61, Asn-63, Thr-65, Glu-70, Asp-96, Asp-98, Asn-100, Glu-107, Asp-132, Asp-134, Asp-136, and Glu-143.

This sequence belongs to the calmodulin family.

Its function is as follows. Calmodulin mediates the control of a large number of enzymes, ion channels and other proteins by Ca(2+). Among the enzymes to be stimulated by the calmodulin-Ca(2+) complex are a number of protein kinases and phosphatases. The polypeptide is Calmodulin (Pneumocystis carinii).